Consider the following 1039-residue polypeptide: Alpha-mannosidase 2C1 (1039 aa).

Co(2+) contacts are provided by His-259, Asp-261, Asp-371, and His-576. The active-site Nucleophile is Asp-371.

This sequence belongs to the glycosyl hydrolase 38 family. It depends on Co(2+) as a cofactor. Expressed in kidney and liver (at protein level). Widely expressed, with highest levels in lung, ovary and testis. Also detected at lower levels in heart, brain, liver, spleen, kidney and thymus.

It is found in the cytoplasm. It catalyses the reaction Hydrolysis of terminal, non-reducing alpha-D-mannose residues in alpha-D-mannosides.. With respect to regulation, inhibited by 1,4-dideoxy-1,4-imino-d-mannitol (DIM) and EDTA. In terms of biological role, cleaves alpha 1,2-, alpha 1,3-, and alpha 1,6-linked mannose residues from glycoproteins. Involved in the degradation of free oligosaccharides in the cytoplasm. This chain is Alpha-mannosidase 2C1, found in Mus musculus (Mouse).